The following is a 149-amino-acid chain: Large ribosomal subunit protein uL13 (149 aa).

It belongs to the universal ribosomal protein uL13 family. As to quaternary structure, part of the 50S ribosomal subunit.

This protein is one of the early assembly proteins of the 50S ribosomal subunit, although it is not seen to bind rRNA by itself. It is important during the early stages of 50S assembly. The chain is Large ribosomal subunit protein uL13 from Chlorobium luteolum (strain DSM 273 / BCRC 81028 / 2530) (Pelodictyon luteolum).